Here is a 668-residue protein sequence, read N- to C-terminus: Bifunctional polymyxin resistance protein ArnA (668 aa).

Residues 1–307 (MSNKAVVFAY…ELGLVDGSLL (307 aa)) are formyltransferase ArnAFT. His-106 acts as the Proton donor; for formyltransferase activity in catalysis. Residues Arg-116 and 138–142 (VKRAD) contribute to the (6R)-10-formyltetrahydrofolate site. The interval 317–668 (RRTRVLILGV…IADRAKQEAR (352 aa)) is dehydrogenase ArnADH. NAD(+) contacts are provided by residues Asp-350 and 371–372 (DI). Residues Ala-396, Tyr-401, and 435-436 (TS) each bind UDP-alpha-D-glucuronate. The active-site Proton acceptor; for decarboxylase activity is Glu-437. UDP-alpha-D-glucuronate is bound by residues Arg-463, Asn-494, 528–537 (RLFDGGEQKR), and Tyr-615. Catalysis depends on Arg-621, which acts as the Proton donor; for decarboxylase activity.

In the N-terminal section; belongs to the Fmt family. UDP-L-Ara4N formyltransferase subfamily. It in the C-terminal section; belongs to the NAD(P)-dependent epimerase/dehydratase family. UDP-glucuronic acid decarboxylase subfamily. Homohexamer, formed by a dimer of trimers.

It catalyses the reaction UDP-alpha-D-glucuronate + NAD(+) = UDP-beta-L-threo-pentopyranos-4-ulose + CO2 + NADH. It carries out the reaction UDP-4-amino-4-deoxy-beta-L-arabinose + (6R)-10-formyltetrahydrofolate = UDP-4-deoxy-4-formamido-beta-L-arabinose + (6S)-5,6,7,8-tetrahydrofolate + H(+). The protein operates within nucleotide-sugar biosynthesis; UDP-4-deoxy-4-formamido-beta-L-arabinose biosynthesis; UDP-4-deoxy-4-formamido-beta-L-arabinose from UDP-alpha-D-glucuronate: step 1/3. Its pathway is nucleotide-sugar biosynthesis; UDP-4-deoxy-4-formamido-beta-L-arabinose biosynthesis; UDP-4-deoxy-4-formamido-beta-L-arabinose from UDP-alpha-D-glucuronate: step 3/3. It participates in bacterial outer membrane biogenesis; lipopolysaccharide biosynthesis. Bifunctional enzyme that catalyzes the oxidative decarboxylation of UDP-glucuronic acid (UDP-GlcUA) to UDP-4-keto-arabinose (UDP-Ara4O) and the addition of a formyl group to UDP-4-amino-4-deoxy-L-arabinose (UDP-L-Ara4N) to form UDP-L-4-formamido-arabinose (UDP-L-Ara4FN). The modified arabinose is attached to lipid A and is required for resistance to polymyxin and cationic antimicrobial peptides. This is Bifunctional polymyxin resistance protein ArnA from Pseudomonas fluorescens (strain ATCC BAA-477 / NRRL B-23932 / Pf-5).